The sequence spans 852 residues: Cell surface glycoprotein (852 aa).

The first 34 residues, 1-34 (MTDTTGKLRAVLLTALMVGSVIGAGVAFTGGAAA), serve as a signal peptide directing secretion. Residue Asn-36 is glycosylated (N-linked (GalNAc...) (glycosaminoglycan) asparagine). The segment at 84–131 (KLDNEKEVSPATLSRTGGSDEGVPLQMPIPEDQSTGSYDSNGPDNDEA) is disordered. The span at 115–126 (DQSTGSYDSNGP) shows a compositional bias: polar residues. 8 N-linked (Glc...) asparagine glycosylation sites follow: Asn-339, Asn-398, Asn-438, Asn-513, Asn-643, Asn-727, Asn-751, and Asn-787. The interval 772–828 (ELEEPDQTTVDQPENNQTMTTTMTETTTETTTEMTTTQENTTENGSEGTSDGESGGS) is disordered. A compositionally biased stretch (low complexity) spans 785–823 (ENNQTMTTTMTETTTETTTEMTTTQENTTENGSEGTSDG). O-linked (Gal...) threonine glycosylation is found at Thr-789, Thr-791, Thr-792, Thr-793, Thr-795, Thr-797, Thr-798, Thr-799, Thr-801, Thr-802, Thr-803, Thr-806, Thr-807, and Thr-808. N-linked (Glc...) asparagine glycosylation is present at Asn-811. O-linked (Gal...) threonine glycans are attached at residues Thr-812 and Thr-813. N-linked (Glc...) asparagine glycosylation is present at Asn-815. Residues 829 to 849 (IPGFGVGVALVAVLGAALLAL) traverse the membrane as a helical segment. The short motif at 830 to 832 (PGF) is the PGF sorting signal element.

The protein belongs to the halobacterial S-layer protein family. N-linked glycan at Asn-36 consists of a glycosaminoglycan chain, constructed by a repeating sulfated pentasaccharide block composed of GlcNAc, GalNAc, Gal, GalA, 3-O-methyl-GalA, and sulfate in the molar ratio of 1:1:1:1:1:2; the other N-linked glycans contain Glc, GlcA and IdoA. Post-translationally, O-linked glycans consist of Glc-Gal disaccharides. In terms of processing, the C-terminus (residues 770-778) is lipidated with diphytanylglyceryl phosphate. Cleaved by the archaeosortase ArtA at the C-terminus, with removal of a short hydrophobic segment.

The protein resides in the secreted. It localises to the cell wall. The protein localises to the S-layer. Its subcellular location is the cell membrane. In terms of biological role, S-layer protein. The S-layer is a paracrystalline mono-layered assembly of proteins which coat the surface of the cell. This Halobacterium salinarum (strain ATCC 29341 / DSM 671 / R1) protein is Cell surface glycoprotein (csg).